The following is a 92-amino-acid chain: Ribonuclease P protein component 1 (92 aa).

This sequence belongs to the eukaryotic/archaeal RNase P protein component 1 family. In terms of assembly, consists of a catalytic RNA component and at least 4-5 protein subunits.

Its subcellular location is the cytoplasm. The enzyme catalyses Endonucleolytic cleavage of RNA, removing 5'-extranucleotides from tRNA precursor.. Its function is as follows. Part of ribonuclease P, a protein complex that generates mature tRNA molecules by cleaving their 5'-ends. The chain is Ribonuclease P protein component 1 from Staphylothermus marinus (strain ATCC 43588 / DSM 3639 / JCM 9404 / F1).